We begin with the raw amino-acid sequence, 315 residues long: ATP synthase gamma chain (315 aa).

This sequence belongs to the ATPase gamma chain family. In terms of assembly, F-type ATPases have 2 components, CF(1) - the catalytic core - and CF(0) - the membrane proton channel. CF(1) has five subunits: alpha(3), beta(3), gamma(1), delta(1), epsilon(1). CF(0) has three main subunits: a, b and c.

It localises to the cellular thylakoid membrane. Produces ATP from ADP in the presence of a proton gradient across the membrane. The gamma chain is believed to be important in regulating ATPase activity and the flow of protons through the CF(0) complex. This Nostoc sp. (strain PCC 7120 / SAG 25.82 / UTEX 2576) protein is ATP synthase gamma chain.